We begin with the raw amino-acid sequence, 164 residues long: Phosphopantetheine adenylyltransferase (164 aa).

Thr10 contacts substrate. ATP-binding positions include 10–11 (TF) and His18. Substrate contacts are provided by Lys44, Leu76, and Arg90. Residues 91-93 (GLR), Glu101, and 126-132 (YAFISSS) contribute to the ATP site.

The protein belongs to the bacterial CoaD family. Homohexamer. It depends on Mg(2+) as a cofactor.

The protein resides in the cytoplasm. It catalyses the reaction (R)-4'-phosphopantetheine + ATP + H(+) = 3'-dephospho-CoA + diphosphate. The protein operates within cofactor biosynthesis; coenzyme A biosynthesis; CoA from (R)-pantothenate: step 4/5. Its function is as follows. Reversibly transfers an adenylyl group from ATP to 4'-phosphopantetheine, yielding dephospho-CoA (dPCoA) and pyrophosphate. The chain is Phosphopantetheine adenylyltransferase from Halorhodospira halophila (strain DSM 244 / SL1) (Ectothiorhodospira halophila (strain DSM 244 / SL1)).